A 319-amino-acid polypeptide reads, in one-letter code: CBBY-like protein (319 aa).

The N-terminal 65 residues, 1-65, are a transit peptide targeting the chloroplast; that stretch reads MATVKISLSL…YRSSRSVGVT (65 aa). Residue aspartate 82 is the Nucleophile of the active site. Residues aspartate 82 and aspartate 84 each contribute to the Mg(2+) site. Substrate is bound at residue aspartate 82. The Proton donor role is filled by aspartate 84. Residues glutamate 91, 125–129, 158–161, and 198–204 each bind substrate; these read GGKER, HKQK, and STSNEKA. Aspartate 258 is a Mg(2+) binding site.

The protein belongs to the HAD-like hydrolase superfamily. DOG/GPP family. It depends on Mg(2+) as a cofactor.

The protein resides in the plastid. The protein localises to the chloroplast. It carries out the reaction D-xylulose 1,5-bisphosphate + H2O = D-xylulose 5-phosphate + phosphate. Highly selective xylulose-1,5-bisphosphate (XuBP) phosphatase. Also shows activity towards ribulose-1,5-bisphosphate (RuBP) and fructose-1,6-bisphosphate (FBP), but not towards fructose-6-phosphate (F6P) or ribulose-5-phosphate (Ru5P). Degrades xylulose-1,5-bisphosphate, a potent inhibitor of rubisco produced by the rubisco itself. The protein is CBBY-like protein of Arabidopsis thaliana (Mouse-ear cress).